A 353-amino-acid chain; its full sequence is Photosystem II protein D1 (353 aa).

An N-acetylthreonine modification is found at Thr2. The residue at position 2 (Thr2) is a Phosphothreonine. 3 helical membrane passes run Tyr29 to Ser46, His118 to Leu133, and Trp142 to Ala156. His118 contacts chlorophyll a. Residue Tyr126 coordinates pheophytin a. Positions 170 and 189 each coordinate [CaMn4O5] cluster. Residues Phe197 to Leu218 traverse the membrane as a helical segment. Residue His198 coordinates chlorophyll a. Residues His215 and Ser264–Phe265 each bind a quinone. Fe cation is bound at residue His215. His272 contributes to the Fe cation binding site. A helical transmembrane segment spans residues Phe274–Leu288. [CaMn4O5] cluster contacts are provided by His332, Glu333, Asp342, and Ala344. Residues Ala345–Gly353 constitute a propeptide that is removed on maturation.

Belongs to the reaction center PufL/M/PsbA/D family. PSII is composed of 1 copy each of membrane proteins PsbA, PsbB, PsbC, PsbD, PsbE, PsbF, PsbH, PsbI, PsbJ, PsbK, PsbL, PsbM, PsbT, PsbX, PsbY, PsbZ, Psb30/Ycf12, at least 3 peripheral proteins of the oxygen-evolving complex and a large number of cofactors. It forms dimeric complexes. The D1/D2 heterodimer binds P680, chlorophylls that are the primary electron donor of PSII, and subsequent electron acceptors. It shares a non-heme iron and each subunit binds pheophytin, quinone, additional chlorophylls, carotenoids and lipids. D1 provides most of the ligands for the Mn4-Ca-O5 cluster of the oxygen-evolving complex (OEC). There is also a Cl(-1) ion associated with D1 and D2, which is required for oxygen evolution. The PSII complex binds additional chlorophylls, carotenoids and specific lipids. is required as a cofactor. Post-translationally, tyr-161 forms a radical intermediate that is referred to as redox-active TyrZ, YZ or Y-Z. C-terminally processed by CTPA; processing is essential to allow assembly of the oxygen-evolving complex and thus photosynthetic growth.

Its subcellular location is the plastid. It localises to the chloroplast thylakoid membrane. The catalysed reaction is 2 a plastoquinone + 4 hnu + 2 H2O = 2 a plastoquinol + O2. Photosystem II (PSII) is a light-driven water:plastoquinone oxidoreductase that uses light energy to abstract electrons from H(2)O, generating O(2) and a proton gradient subsequently used for ATP formation. It consists of a core antenna complex that captures photons, and an electron transfer chain that converts photonic excitation into a charge separation. The D1/D2 (PsbA/PsbD) reaction center heterodimer binds P680, the primary electron donor of PSII as well as several subsequent electron acceptors. This is Photosystem II protein D1 from Nymphaea alba (White water-lily).